A 195-amino-acid chain; its full sequence is MASLIDDDDGEFLIGRLLVAMPGIEDPRFERTVLYLCAHDEDAAMGLAVNRPVEGLTVFELLNRLGVRSEIQAPSDLVLLGGPLERERGFVLHTDDFSSPDSTLPVADGVALTATRDALDAMASAIKRPRKSLLALGYAGWGPGQLEQELRDNVWLICDADEGLLFDEDHEHKWTRALAKLGITADHLSATAGRA.

It belongs to the UPF0301 (AlgH) family.

This is UPF0301 protein CCNA_03506 from Caulobacter vibrioides (strain NA1000 / CB15N) (Caulobacter crescentus).